The primary structure comprises 318 residues: Peroxisomal and mitochondrial division factor 1 (318 aa).

The disordered stretch occupies residues 1–39; sequence MADVEDRAAKGISDYDQGGVKTTELERKIEDMENKNQEL. The Cytoplasmic portion of the chain corresponds to 1 to 291; the sequence is MADVEDRAAK…QKGSLEAEYQ (291 aa). Positions 19–260 form a coiled coil; sequence GVKTTELERK…KKVEEGNKTV (242 aa). Positions 23 to 39 are enriched in basic and acidic residues; it reads TELERKIEDMENKNQEL. Residues 292-312 traverse the membrane as a helical segment; that stretch reads WPVVAAGSVGAAGLVAATFFV. Over 313–318 the chain is Mitochondrial intermembrane; sequence CYSKLR.

In terms of assembly, homodimer. Interacts with PMD2.

The protein localises to the peroxisome membrane. It localises to the mitochondrion outer membrane. Involved in morphogenesis and proliferation of peroxisomes and mitochondria, independently from the previously defined pathway controlled by the FIS1-DRP3 complex. In Arabidopsis thaliana (Mouse-ear cress), this protein is Peroxisomal and mitochondrial division factor 1.